A 209-amino-acid chain; its full sequence is Ubiquinone biosynthesis protein COQ4 homolog 2, mitochondrial (209 aa).

4 residues coordinate Zn(2+): histidine 118, aspartate 119, histidine 122, and glutamate 134.

This sequence belongs to the COQ4 family. Component of a multi-subunit COQ enzyme complex. Zn(2+) serves as cofactor.

Its subcellular location is the mitochondrion inner membrane. It carries out the reaction a 4-hydroxy-3-methoxy-5-(all-trans-polyprenyl)benzoate + H(+) = a 2-methoxy-6-(all-trans-polyprenyl)phenol + CO2. It participates in cofactor biosynthesis; ubiquinone biosynthesis. Lyase that catalyzes the C1-decarboxylation of 4-hydroxy-3-methoxy-5-(all-trans-polyprenyl)benzoic acid into 2-methoxy-6-(all-trans-polyprenyl)phenol during ubiquinone biosynthesis. The protein is Ubiquinone biosynthesis protein COQ4 homolog 2, mitochondrial of Paramecium tetraurelia.